A 337-amino-acid polypeptide reads, in one-letter code: MTQVFQGRSFLAEKDFTRAELEYLIDFSAHLKDLKKRGVPHHYLEGKNIALLFEKTSTRTRSAFTTAAIDLGAHPEYLGANDIQLGKKESTEDTAKVLGRMFDGIEFRGFSQRKVEELAEFSGVPVWNGLTDEWHPTQMLADFLTVKENFGKLEGLTLVYCGDGRNNMANSLLVTGAILGVNVRIFSPKELFPADDIVKLAESYAKESGAKLLITEDADEAVRGADVLYTDVWVSMGEESKFEERVKLLKPYQVNMELIKKAGNENLIFLHCLPAFHDTNTVYGKDIEEKFGVKEMEVTDEVFRSSYARQFDQAENRMHTIKAVMAATLGNLFIPKV.

Carbamoyl phosphate contacts are provided by residues 57–60 (STRT), Gln-84, Arg-108, and 135–138 (HPTQ). L-ornithine contacts are provided by residues Asn-167, Asp-231, and 235–236 (SM). Carbamoyl phosphate is bound by residues 272 to 273 (CL) and Arg-317.

The protein belongs to the aspartate/ornithine carbamoyltransferase superfamily. OTCase family.

The protein resides in the cytoplasm. It catalyses the reaction carbamoyl phosphate + L-ornithine = L-citrulline + phosphate + H(+). It participates in amino-acid degradation; L-arginine degradation via ADI pathway; carbamoyl phosphate from L-arginine: step 2/2. Reversibly catalyzes the transfer of the carbamoyl group from carbamoyl phosphate (CP) to the N(epsilon) atom of ornithine (ORN) to produce L-citrulline. This Streptococcus ratti protein is Ornithine carbamoyltransferase, catabolic.